The chain runs to 586 residues: 3-hydroxy-3-methylglutaryl-coenzyme A reductase 3 (586 aa).

A run of 2 helical transmembrane segments spans residues P36–V59 and A87–V107. Residues H108–D170 form a linker region. Catalytic stretches follow at residues D171 to F586 and D172 to F586. Residues E265, K397, and D473 each act as charge relay system in the active site. Catalysis depends on H571, which acts as the Proton donor. A glycan (N-linked (GlcNAc...) asparagine) is linked at N575.

Belongs to the HMG-CoA reductase family.

The protein localises to the endoplasmic reticulum membrane. The protein resides in the mitochondrion membrane. It is found in the plastid membrane. The catalysed reaction is (R)-mevalonate + 2 NADP(+) + CoA = (3S)-3-hydroxy-3-methylglutaryl-CoA + 2 NADPH + 2 H(+). It functions in the pathway metabolic intermediate biosynthesis; (R)-mevalonate biosynthesis; (R)-mevalonate from acetyl-CoA: step 3/3. Functionally, catalyzes the synthesis of mevalonate. The specific precursor of all isoprenoid compounds present in plants. The chain is 3-hydroxy-3-methylglutaryl-coenzyme A reductase 3 (HMGR3) from Hevea brasiliensis (Para rubber tree).